Consider the following 491-residue polypeptide: MSIPGLGQIAPQAPTTTQRTINLRPFGEWRFSIPHQHSTFSSNSSAAGVTVRLVAGTAERDGTELAPNCVYTFLPGTKSKLFTDQGCTLEINNTGGYPLEDRVVEHPPEQSPMLSYINLHFGLQDHERAAAAQAQQQHPTHHQQQQQGRGAGAGVARSKPGPRVLICGPPGVGKTSLAKLLAALATRMGSQPLVANLNPTDGLLCLPGTLGAAVFGTLMDVEEPAGGFGVTNTPISGPSAVPVKNPLTFYFGHEKVEDDVDMWRQMTERLAVLARRKFERNRDVRVAGLLVDTAPVEAGDKEGQELLGWAVRQFDANFVVVLGSEQLKTELGQRFASEKTSFEEPITVLGLDKSDGAVQIDKAWRQKSTETAIKEYFFGGIKARLSPFTQSASFDELVVFKAPDEPYEGAPVLERVEITPEMAHWTLAVMIASVTDSPQAIRFSSVLGFIVIADVDQERRRVKFLSPVSGRLGNHPLIWGRWPEPYLNLLA.

The ATP site is built by Glu-28 and Lys-78. The interval 128–160 (RAAAAQAQQQHPTHHQQQQQGRGAGAGVARSKP) is disordered. Positions 130–148 (AAAQAQQQHPTHHQQQQQG) are enriched in low complexity. 171-176 (GVGKTS) is a binding site for ATP.

The protein belongs to the Clp1 family. Clp1 subfamily. As to quaternary structure, component of a pre-mRNA cleavage factor complex. Interacts directly with PCF11.

It is found in the nucleus. Its function is as follows. Required for endonucleolytic cleavage during polyadenylation-dependent pre-mRNA 3'-end formation. The sequence is that of mRNA cleavage and polyadenylation factor clp1 (paa-7) from Neurospora crassa (strain ATCC 24698 / 74-OR23-1A / CBS 708.71 / DSM 1257 / FGSC 987).